A 340-amino-acid chain; its full sequence is Putative esterase YheT (340 aa).

In terms of domain architecture, AB hydrolase-1 spans 73 to 312 (PRLVVFHGLE…TEHGGHVGFI (240 aa)). Active-site charge relay system residues include S153, D280, and H308.

This sequence belongs to the AB hydrolase superfamily. AB hydrolase 4 family.

This chain is Putative esterase YheT (yheT), found in Escherichia coli (strain K12).